A 267-amino-acid chain; its full sequence is L-aspartate dehydrogenase 2 (267 aa).

NAD(+) contacts are provided by Ala-123 and Asn-189. His-219 is a catalytic residue.

The protein belongs to the L-aspartate dehydrogenase family.

It carries out the reaction L-aspartate + NADP(+) + H2O = oxaloacetate + NH4(+) + NADPH + H(+). The enzyme catalyses L-aspartate + NAD(+) + H2O = oxaloacetate + NH4(+) + NADH + H(+). The protein operates within cofactor biosynthesis; NAD(+) biosynthesis; iminoaspartate from L-aspartate (dehydrogenase route): step 1/1. Specifically catalyzes the NAD or NADP-dependent dehydrogenation of L-aspartate to iminoaspartate. The protein is L-aspartate dehydrogenase 2 of Bordetella pertussis (strain Tohama I / ATCC BAA-589 / NCTC 13251).